Here is an 851-residue protein sequence, read N- to C-terminus: Venom phosphodiesterase (851 aa).

The N-terminal stretch at 1-23 (MIQQKVLFISLVAVALGLGLGLG) is a signal peptide. 2 consecutive SMB domains span residues 30-73 (PQVS…VLPT) and 74-118 (QSWS…GETS). Cystine bridges form between Cys34–Cys38, Cys34–Cys51, Cys38–Cys69, Cys49–Cys51, Cys49–Cys62, Cys55–Cys61, Cys62–Cys69, Cys78–Cys83, Cys78–Cys95, Cys83–Cys113, Cys93–Cys95, Cys93–Cys106, Cys99–Cys105, Cys106–Cys113, Cys124–Cys170, and Cys132–Cys344. N-linked (GlcNAc...) asparagine glycosylation is present at Asn39. The short motif at 58 to 60 (RQA) is the Cell attachment site element. Asp147 and Thr185 together coordinate a divalent metal cation. The active-site AMP-threonine intermediate is the Thr185. N-linked (GlcNAc...) asparagine glycosylation is found at Asn216, Asn259, and Asn270. Lys271 lines the AMP pocket. Residues Asp305, His309, Asp352, and His353 each contribute to the a divalent metal cation site. An AMP-binding site is contributed by His309. Disulfide bonds link Cys360/Cys457, Cys408/Cys793, Cys541/Cys599, Cys554/Cys654, Cys556/Cys639, and Cys762/Cys772. Residue Asn405 is glycosylated (N-linked (GlcNAc...) asparagine). An a divalent metal cation-binding site is contributed by His462. Asn512, Asn594, and Asn745 each carry an N-linked (GlcNAc...) asparagine glycan.

Belongs to the nucleotide pyrophosphatase/phosphodiesterase family. In terms of assembly, monomer cleaved in two subunits; disulfide-linked. Is synthesized as a single-chain protein and is subsequently cleaved to form a two-subunit protein held together with disulfide bonds. Requires a divalent metal cation as cofactor. In terms of tissue distribution, expressed by venom gland.

It is found in the secreted. It catalyses the reaction ADP + H2O = AMP + phosphate + H(+). Functionally, hydrolyzes ADP with high activity. Shows weak or no activity on 5'-AMP, 5'-GMP, 3'-AMP, ATP, cAMP, and cGMP. Is devoid of monophosphatase and proteinase activities. Dose-dependently inhibits platelet aggregation induced by ADP (IC(50)=0.99 uM) and collagen (IC(50)=1.4 uM). This Macrovipera lebetinus (Levantine viper) protein is Venom phosphodiesterase.